The following is a 509-amino-acid chain: Steroid 17-alpha-hydroxylase/17,20 lyase (509 aa).

Position 440 (Cys-440) interacts with heme.

This sequence belongs to the cytochrome P450 family. Heme is required as a cofactor.

It is found in the endoplasmic reticulum membrane. Its subcellular location is the microsome membrane. The enzyme catalyses a C21-steroid + reduced [NADPH--hemoprotein reductase] + O2 = a 17alpha-hydroxy-C21-steroid + oxidized [NADPH--hemoprotein reductase] + H2O + H(+). The catalysed reaction is progesterone + reduced [NADPH--hemoprotein reductase] + O2 = 17alpha-hydroxyprogesterone + oxidized [NADPH--hemoprotein reductase] + H2O + H(+). It catalyses the reaction pregnenolone + reduced [NADPH--hemoprotein reductase] + O2 = 17alpha-hydroxypregnenolone + oxidized [NADPH--hemoprotein reductase] + H2O + H(+). It carries out the reaction 17alpha-hydroxyprogesterone + reduced [NADPH--hemoprotein reductase] + O2 = androst-4-ene-3,17-dione + acetate + oxidized [NADPH--hemoprotein reductase] + H2O + 2 H(+). The enzyme catalyses 17alpha-hydroxyprogesterone + reduced [NADPH--hemoprotein reductase] + O2 = 16alpha,17alpha-dihydroxyprogesterone + oxidized [NADPH--hemoprotein reductase] + H2O + H(+). The catalysed reaction is 16alpha,17alpha-dihydroxyprogesterone + reduced [NADPH--hemoprotein reductase] + O2 = 6beta,16alpha,17alpha-trihydroxyprogesterone + oxidized [NADPH--hemoprotein reductase] + H2O + H(+). It catalyses the reaction 17alpha-hydroxypregnenolone + reduced [NADPH--hemoprotein reductase] + O2 = 3beta-hydroxyandrost-5-en-17-one + acetate + oxidized [NADPH--hemoprotein reductase] + H2O + 2 H(+). It carries out the reaction 16alpha,17alpha-dihydroxypregnenolone + reduced [NADPH--hemoprotein reductase] + O2 = 3beta,16alpha-dihydroxy-androst-5-en-17-one + acetate + oxidized [NADPH--hemoprotein reductase] + H2O + 2 H(+). The enzyme catalyses 3beta-hydroxyandrost-5-en-17-one + reduced [NADPH--hemoprotein reductase] + O2 = 3beta,16alpha-dihydroxy-androst-5-en-17-one + oxidized [NADPH--hemoprotein reductase] + H2O + H(+). The catalysed reaction is androst-4-ene-3,17-dione + reduced [NADPH--hemoprotein reductase] + O2 = 16alpha-hydroxyandrost-4-ene-3,17-dione + oxidized [NADPH--hemoprotein reductase] + H2O + H(+). It functions in the pathway steroid hormone biosynthesis. Its pathway is steroid biosynthesis; glucocorticoid biosynthesis. Regulated predominantly by intracellular cAMP levels. The 17,20-lyase activity is stimulated by cytochrome b5, which acts as an allosteric effector increasing the Vmax of the lyase activity. Its function is as follows. A cytochrome P450 monooxygenase involved in corticoid and androgen biosynthesis. Catalyzes 17-alpha hydroxylation of C21 steroids, which is common for both pathways. A second oxidative step, required only for androgen synthesis, involves an acyl-carbon cleavage. The 17-alpha hydroxy intermediates, as part of adrenal glucocorticoids biosynthesis pathway, are precursors of cortisol. Hydroxylates steroid hormones, pregnenolone and progesterone to form 17-alpha hydroxy metabolites, followed by the cleavage of the C17-C20 bond to form C19 steroids, dehydroepiandrosterone (DHEA) and androstenedione. Has 16-alpha hydroxylase activity. Catalyzes 16-alpha hydroxylation of 17-alpha hydroxy pregnenolone, followed by the cleavage of the C17-C20 bond to form 16-alpha-hydroxy DHEA. Also 16-alpha hydroxylates androgens, relevant for estriol synthesis. Mechanistically, uses molecular oxygen inserting one oxygen atom into a substrate, and reducing the second into a water molecule, with two electrons provided by NADPH via cytochrome P450 reductase (CPR; NADPH-ferrihemoprotein reductase). This is Steroid 17-alpha-hydroxylase/17,20 lyase (Cyp17a1) from Peromyscus leucopus (White-footed mouse).